A 158-amino-acid polypeptide reads, in one-letter code: Transcription elongation factor GreA (158 aa).

Positions 48–74 form a coiled coil; sequence EYDAAKNRQGFIEGRIKELNDKIARAE.

It belongs to the GreA/GreB family.

In terms of biological role, necessary for efficient RNA polymerase transcription elongation past template-encoded arresting sites. The arresting sites in DNA have the property of trapping a certain fraction of elongating RNA polymerases that pass through, resulting in locked ternary complexes. Cleavage of the nascent transcript by cleavage factors such as GreA or GreB allows the resumption of elongation from the new 3'terminus. GreA releases sequences of 2 to 3 nucleotides. In Syntrophotalea carbinolica (strain DSM 2380 / NBRC 103641 / GraBd1) (Pelobacter carbinolicus), this protein is Transcription elongation factor GreA.